The chain runs to 347 residues: DNA-directed RNA polymerase subunit alpha (347 aa).

The alpha N-terminal domain (alpha-NTD) stretch occupies residues 1-243; that stretch reads MLFREGTRLI…DQISVFINFD (243 aa). The segment at 255–347 is alpha C-terminal domain (alpha-CTD); that stretch reads SGSSDLNDNL…EWKRKQHHEA (93 aa).

Belongs to the RNA polymerase alpha chain family. In terms of assembly, homodimer. The RNAP catalytic core consists of 2 alpha, 1 beta, 1 beta' and 1 omega subunit. When a sigma factor is associated with the core the holoenzyme is formed, which can initiate transcription.

The catalysed reaction is RNA(n) + a ribonucleoside 5'-triphosphate = RNA(n+1) + diphosphate. DNA-dependent RNA polymerase catalyzes the transcription of DNA into RNA using the four ribonucleoside triphosphates as substrates. The sequence is that of DNA-directed RNA polymerase subunit alpha from Lawsonia intracellularis (strain PHE/MN1-00).